The sequence spans 463 residues: Ribosomal protein uS12 methylthiotransferase RimO (463 aa).

An MTTase N-terminal domain is found at 11 to 126 (PKIGFVSLGC…VMEVVHTHCP (116 aa)). Positions 20, 56, 85, 161, 165, and 168 each coordinate [4Fe-4S] cluster. Residues 147-388 (LTPRHYAYLK…MAVAEEVSTA (242 aa)) enclose the Radical SAM core domain. The 73-residue stretch at 391–463 (QRRVGQTMQV…QGHDLVGVPV (73 aa)) folds into the TRAM domain.

Belongs to the methylthiotransferase family. RimO subfamily. The cofactor is [4Fe-4S] cluster.

It localises to the cytoplasm. The enzyme catalyses L-aspartate(89)-[ribosomal protein uS12]-hydrogen + (sulfur carrier)-SH + AH2 + 2 S-adenosyl-L-methionine = 3-methylsulfanyl-L-aspartate(89)-[ribosomal protein uS12]-hydrogen + (sulfur carrier)-H + 5'-deoxyadenosine + L-methionine + A + S-adenosyl-L-homocysteine + 2 H(+). Functionally, catalyzes the methylthiolation of an aspartic acid residue of ribosomal protein uS12. This chain is Ribosomal protein uS12 methylthiotransferase RimO, found in Acidovorax sp. (strain JS42).